Here is a 132-residue protein sequence, read N- to C-terminus: Small ribosomal subunit protein uS8 (132 aa).

The protein belongs to the universal ribosomal protein uS8 family. Part of the 30S ribosomal subunit. Contacts proteins S5 and S12.

One of the primary rRNA binding proteins, it binds directly to 16S rRNA central domain where it helps coordinate assembly of the platform of the 30S subunit. This is Small ribosomal subunit protein uS8 from Listeria innocua serovar 6a (strain ATCC BAA-680 / CLIP 11262).